A 250-amino-acid chain; its full sequence is Ribosomal RNA small subunit methyltransferase J (250 aa).

S-adenosyl-L-methionine-binding positions include 96–97 and aspartate 168; that span reads RD.

The protein belongs to the methyltransferase superfamily. RsmJ family.

Its subcellular location is the cytoplasm. It carries out the reaction guanosine(1516) in 16S rRNA + S-adenosyl-L-methionine = N(2)-methylguanosine(1516) in 16S rRNA + S-adenosyl-L-homocysteine + H(+). In terms of biological role, specifically methylates the guanosine in position 1516 of 16S rRNA. The protein is Ribosomal RNA small subunit methyltransferase J of Neisseria meningitidis serogroup C / serotype 2a (strain ATCC 700532 / DSM 15464 / FAM18).